Here is a 78-residue protein sequence, read N- to C-terminus: Large ribosomal subunit protein uL29 (78 aa).

Belongs to the universal ribosomal protein uL29 family.

The chain is Large ribosomal subunit protein uL29 from Rhodococcus opacus (strain B4).